The chain runs to 375 residues: MGASEEMKVLERVPVSKPPFEYNDLKKAVPPHCFTRSLSLSFYYLFYDLIKVCILFYVASKYIPMLPYSLSCIVWPLYWFFQGAFLGRLWMIGHECGHHSFSNYRWLDDTVGFLVHTATLTPYFSFKYSHRNHHAHTNSLEYDEVHVPKIRKFKSEHLYSEFLTNNPFGLVVNMVFELTFGYPSYLIFNYSGRKLTQAGFASHLYPQSPIFNDSERNHVFFSDVGICIVLYALYRIAIAKGAMLVLYVYGLPWVVMSAFIFSLTYLQHTHPSIPHYDSTEWNWLRGALSSIDRELAGAFNIKKTHYHVVHHLFPFIPEYHAHDATEALKPILGPYYKYDGTPFYKALWREMKDCLYVESDDGPNKTGVYWFKTKT.

2 helical membrane passes run 38–58 (LSLS…LFYV) and 66–86 (LPYS…GAFL). Residues 94-98 (HECGH) carry the Histidine box-1 motif. A Histidine box-2 motif is present at residues 130–134 (HRNHH). 3 consecutive transmembrane segments (helical) span residues 168–188 (FGLV…YLIF), 219–239 (VFFS…IAIA), and 241–261 (GAML…AFIF). Residues 307–311 (HVVHH) carry the Histidine box-3 motif.

The protein belongs to the fatty acid desaturase type 1 family.

It is found in the membrane. Involved in the biosynthesis of dimorphecolic acid (9-OH-18:2(10E,12E)). Catalyzes the formation of the C-9 hydroxyl group and the (E)-delta(10) double bond from the trans-linoleic acid (16:2(9Z,12E)) produced by FAD2-1. Very limited activity with cis-linoleic acid (16:2(9Z,12Z)). This is Delta(9) fatty acid conjugase-like enzyme from Dimorphotheca sinuata (African daisy).